Consider the following 217-residue polypeptide: Imidazole glycerol phosphate synthase subunit HisH (217 aa).

The Glutamine amidotransferase type-1 domain maps to 3–217 (SVAVIDYGMG…FLRWEPWSSR (215 aa)). Cys-82 serves as the catalytic Nucleophile. Catalysis depends on residues His-193 and Glu-195.

Heterodimer of HisH and HisF.

It is found in the cytoplasm. The catalysed reaction is 5-[(5-phospho-1-deoxy-D-ribulos-1-ylimino)methylamino]-1-(5-phospho-beta-D-ribosyl)imidazole-4-carboxamide + L-glutamine = D-erythro-1-(imidazol-4-yl)glycerol 3-phosphate + 5-amino-1-(5-phospho-beta-D-ribosyl)imidazole-4-carboxamide + L-glutamate + H(+). It carries out the reaction L-glutamine + H2O = L-glutamate + NH4(+). It participates in amino-acid biosynthesis; L-histidine biosynthesis; L-histidine from 5-phospho-alpha-D-ribose 1-diphosphate: step 5/9. IGPS catalyzes the conversion of PRFAR and glutamine to IGP, AICAR and glutamate. The HisH subunit catalyzes the hydrolysis of glutamine to glutamate and ammonia as part of the synthesis of IGP and AICAR. The resulting ammonia molecule is channeled to the active site of HisF. This Methylococcus capsulatus (strain ATCC 33009 / NCIMB 11132 / Bath) protein is Imidazole glycerol phosphate synthase subunit HisH.